Reading from the N-terminus, the 498-residue chain is Myocyte-specific enhancer factor 2A (498 aa).

Residues 3–57 (RKKIQITRIMDERNRQVTFTKRKFGLMKKAYELSVLCDCEIALIIFNSSNKLFQY) form the MADS-box domain. The segment at residues 58-86 (ASTDMDKVLLKYTEYNEPHESRTNSDIVE) is a DNA-binding region (mef2-type). Phosphoserine; by CK2 is present on serine 59. 2 positions are modified to phosphoserine: serine 98 and serine 108. Serine 108 is subject to Phosphothreonine. Residues 172–220 (LADSSMLSPPPATLHRNVSPGAPQRPPSTGSASGMLSTTDLTVPNGAGN) are disordered. A compositionally biased stretch (polar residues) spans 198-220 (PSTGSASGMLSTTDLTVPNGAGN). Serine 233 carries the phosphoserine modification. Residues 240–268 (TGANSLGKVMPTKSPPPPGGGSLGMNSRK) form a disordered region. The residue at position 247 (lysine 247) is an N6-acetyllysine. Serine 253 carries the phosphoserine modification. The segment at 264–281 (MNSRKPDLRVVIPPSSKG) is required for interaction with MAPKs. The tract at residues 287-294 (SEEEELEL) is beta domain. 2 positions are modified to phosphothreonine; by MAPK7: threonine 310 and threonine 317. Threonine 310 bears the Phosphothreonine; by NLK mark. Phosphoserine; by MAPK7 is present on serine 353. Residues 388–400 (SNLSINTNQNINI) show a composition bias toward polar residues. The interval 388–498 (SNLSINTNQN…KRMRMDTWVT (111 aa)) is disordered. Lysine 401 bears the N6-acetyllysine; alternate mark. Residue lysine 401 forms a Glycyl lysine isopeptide (Lys-Gly) (interchain with G-Cter in SUMO); alternate linkage. Serine 406 is subject to Phosphoserine. A Phosphothreonine modification is found at threonine 413. The span at 426–436 (QQPPPQPPQPQ) shows a compositional bias: pro residues. Serine 444 bears the Phosphoserine mark. Positions 444-457 (SPVDSLSSSSSSYD) are enriched in low complexity. 2 stretches are compositionally biased toward basic and acidic residues: residues 458–468 (GSDREDPRGDF) and 479–498 (NTED…TWVT).

The protein belongs to the MEF2 family. Binds DNA as a homo- or heterodimer. Dimerizes with MEF2D. Interacts with HDAC7. Interacts with PIAS1; the interaction enhances sumoylation. Interacts with HDAC4, HDAC9 and SLC2A4RG. Interacts (via the N-terminal) with MAPK7; the interaction results in the phosphorylation and transcriptional activity of MEF2A. Constitutive phosphorylation on Ser-406 promotes Lys-401 sumoylation thus preventing acetylation at this site. Dephosphorylation on Ser-406 by PPP3CA upon neuron depolarization promotes a switch from sumoylation to acetylation on residue Lys-403 leading to inhibition of dendrite claw differentiation. Phosphorylation on Thr-312 and Thr-319 are the main sites involved in p38 MAPK signaling and activate transcription. Phosphorylated on these sites by MAPK14/p38alpha and MAPK11/p38beta, but not by MAPK13/p38delta nor by MAPK12/p38gamma. Phosphorylation on Ser-408 by CDK5 induced by neurotoxicity inhibits MEF2A transcriptional activation leading to apoptosis of cortical neurons. Phosphorylation on Thr-312, Thr-319 and Ser-355 can be induced by EGF. Isoform 3 is phosphorylated on Ser-98 and Thr-108. Post-translationally, sumoylation on Lys-401 is enhanced by PIAS1 and represses transcriptional activity. Phosphorylation on Ser-406 is required for sumoylation. Has no effect on nuclear location nor on DNA binding. Sumoylated with SUMO1 and, to a lesser extent with SUMO2 and SUMO3. PIASx facilitates sumoylation in postsynaptic dendrites in the cerebellar cortex and promotes their morphogenesis. In terms of processing, acetylation on Lys-401 activates transcriptional activity. Acetylated by p300 on several sites in diffentiating myocytes. Acetylation on Lys-4 increases DNA binding and transactivation. Hyperacetylation by p300 leads to enhanced cardiac myocyte growth and heart failure. Proteolytically cleaved in cerebellar granule neurons on several sites by caspase 3 and caspase 7 following neurotoxicity. Preferentially cleaves the CDK5-mediated hyperphosphorylated form which leads to neuron apoptosis and transcriptional inactivation. In terms of tissue distribution, widely expressed though mainly restricted to skeletal and cardiac muscle, brain, neurons and lymphocytes. Differentially expressed depending on if isoforms contain the beta domain or not, with the total expression of the beta domain-lacking isoforms vastly exceeding that of the beta domain-containing isoforms. Isoforms containing the beta domain are expressed primarily in skeletal and cardiac muscle and in brain. Also present in lung and testis. Splicing to include the beta domain is induced in differentiating myocytes. Isoforms lacking the beta domain are expressed less abundantly in skeletal muscle, brain and lymphocytes, and are uniquely found in ovary, liver, spleen and kidney. In embryos, the beta domain-containing and beta domain-lacking isoforms are equally expressed. Also expressed cerebellar granule neurons and other regions of the CNS. Highest levels in the olfactory bulb, cortex, hippocampus, thalamus and cerebellum.

Its subcellular location is the nucleus. In terms of biological role, transcriptional activator which binds specifically to the MEF2 element, 5'-YTA[AT](4)TAR-3', found in numerous muscle-specific genes. Also involved in the activation of numerous growth factor- and stress-induced genes. Mediates cellular functions not only in skeletal and cardiac muscle development, but also in neuronal differentiation and survival. Plays diverse roles in the control of cell growth, survival and apoptosis via p38 MAPK signaling in muscle-specific and/or growth factor-related transcription. In cerebellar granule neurons, phosphorylated and sumoylated MEF2A represses transcription of NUR77 promoting synaptic differentiation. Associates with chromatin to the ZNF16 promoter. The protein is Myocyte-specific enhancer factor 2A (Mef2a) of Mus musculus (Mouse).